A 167-amino-acid chain; its full sequence is Leptin (167 aa).

The N-terminal stretch at 1 to 21 (MCWRPLCRFLWLWSYLSYVQA) is a signal peptide. A disulfide bridge links Cys117 with Cys167.

It belongs to the leptin family.

The protein resides in the secreted. In terms of biological role, key player in the regulation of energy balance and body weight control. Once released into the circulation, has central and peripheral effects by binding LEPR, found in many tissues, which results in the activation of several major signaling pathways. In the hypothalamus, acts as an appetite-regulating factor that induces a decrease in food intake and an increase in energy consumption by inducing anorexinogenic factors and suppressing orexigenic neuropeptides, also regulates bone mass and secretion of hypothalamo-pituitary-adrenal hormones. In the periphery, increases basal metabolism, influences reproductive function, regulates pancreatic beta-cell function and insulin secretion, is pro-angiogenic for endothelial cell and affects innate and adaptive immunity. In the arcuate nucleus of the hypothalamus, activates by depolarization POMC neurons inducing FOS and SOCS3 expression to release anorexigenic peptides and inhibits by hyperpolarization NPY neurons inducing SOCS3 with a consequent reduction on release of orexigenic peptides. In addition to its known satiety inducing effect, has a modulatory role in nutrient absorption. In the intestine, reduces glucose absorption by enterocytes by activating PKC and leading to a sequential activation of p38, PI3K and ERK signaling pathways which exerts an inhibitory effect on glucose absorption. Acts as a growth factor on certain tissues, through the activation of different signaling pathways increases expression of genes involved in cell cycle regulation such as CCND1, via JAK2-STAT3 pathway, or VEGFA, via MAPK1/3 and PI3K-AKT1 pathways. May also play an apoptotic role via JAK2-STAT3 pathway and up-regulation of BIRC5 expression. Pro-angiogenic, has mitogenic activity on vascular endothelial cells and plays a role in matrix remodeling by regulating the expression of matrix metalloproteinases (MMPs) and tissue inhibitors of metalloproteinases (TIMPs). In innate immunity, modulates the activity and function of neutrophils by increasing chemotaxis and the secretion of oxygen radicals. Increases phagocytosis by macrophages and enhances secretion of pro-inflammatory mediators. Increases cytotoxic ability of NK cells. Plays a pro-inflammatory role, in synergy with IL1B, by inducing NOS2 which promotes the production of IL6, IL8 and Prostaglandin E2, through a signaling pathway that involves JAK2, PI3K, MAP2K1/MEK1 and MAPK14/p38. In adaptive immunity, promotes the switch of memory T-cells towards T helper-1 cell immune responses. Increases CD4(+)CD25(-) T-cell proliferation and reduces autophagy during TCR (T-cell receptor) stimulation, through MTOR signaling pathway activation and BCL2 up-regulation. The chain is Leptin (Lep) from Rattus norvegicus (Rat).